The following is a 35-amino-acid chain: Beta-theraphotoxin-Hlv1a (35 aa).

3 disulfides stabilise this stretch: Cys2-Cys17, Cys9-Cys24, and Cys16-Cys31.

Belongs to the neurotoxin 10 (Hwtx-1) family. 10 (haplotoxin-1) subfamily. Expressed by the venom gland.

The protein resides in the secreted. Spider venom neurotoxin that blocks voltage-gated sodium channel Nav1.3/SCN3A in human (IC(50)=1 uM) and rat (IC(50)=1 uM). The chain is Beta-theraphotoxin-Hlv1a from Cyriopagopus lividus (Cobalt blue tarantula).